A 343-amino-acid chain; its full sequence is MKVMHIHFGTEGGAERFFVNLVNALHERGVEQRALIRPGRSWRKDLENGATIYEGVFRRISLSRFLLKWRMNRVLREFEPDVIMAWQLRASRFMPAHAKAFRISRLGDYPEHLGYYTNVQTLVCITPDMAAKVRELGWKRDIEVIANFTRARPAPPVARADLQTPADAFVVVGMGRFVKRKGFAGLIRAVKEVENTYLWLVGDGPEREQLEQLTDELGLRDRVRFTGWQTNAYGFLSAGDAFVINSSHEPLGNVCFEGWGAGKPTIASRAEGPSWVMTHESDALMVDCGDDVGLAAAIRRLRDDPALRERLSAGGSETLRTRFSEKAITDAYLDLFDRGVAKR.

The protein belongs to the glycosyltransferase group 1 family. Glycosyltransferase 4 subfamily.

It participates in bacterial outer membrane biogenesis; LPS core biosynthesis. This is Lipopolysaccharide core biosynthesis glycosyltransferase LpsD (lpsD) from Rhizobium meliloti (strain 1021) (Ensifer meliloti).